The sequence spans 278 residues: Short-chain dehydrogenase RED2 (278 aa).

Residues isoleucine 15, aspartate 70, arginine 132, tyrosine 178, lysine 182, valine 211, and threonine 213 each coordinate NADP(+). Catalysis depends on tyrosine 178, which acts as the Proton donor. Lysine 182 serves as the catalytic Lowers pKa of active site Tyr.

It belongs to the short-chain dehydrogenases/reductases (SDR) family.

The protein operates within polyketide biosynthesis. Its function is as follows. Short-chain dehydrogenase; part of the gene cluster that mediates the biosynthesis of pyriculol and pyriculariol, two heptaketides that induce lesion formation upon application on rice leaves but are dispensable for pathogenicity. The highly reducing polyketide synthase synthesizes the heptaketide backbone of pyriculol and pyriculariol. Pyriculol and pyriculariol contain several hydroxyl moieties and double bonds, so it can be assumed that several reduction steps occur during biosynthesis. These reactions could be executed by PKS19 itself or partly by the tailoring enzymes OXR1, OXR2, RED1, RED2 or RED3, identified within the cluster. The FAD-linked oxidoreductase OXR1 is the only tailoring enzyme for which the function has been determined yet, and is involved in the oxidation of dihydropyriculol and dihydropyriculariol into pyriculol and pyriculariol, respectively. The sequence is that of Short-chain dehydrogenase RED2 from Pyricularia oryzae (strain 70-15 / ATCC MYA-4617 / FGSC 8958) (Rice blast fungus).